The primary structure comprises 445 residues: tRNA-2-methylthio-N(6)-dimethylallyladenosine synthase (445 aa).

Positions 3–124 (KKLYIKTYGC…LPELISKVVR (122 aa)) constitute an MTTase N-terminal domain. Cys12, Cys48, Cys87, Cys162, Cys166, and Cys169 together coordinate [4Fe-4S] cluster. Residues 148–380 (YTQGASSFIS…QKELATQQLA (233 aa)) form the Radical SAM core domain. One can recognise a TRAM domain in the interval 383–445 (ESCVGSTMKV…ALNSLTGEIL (63 aa)).

This sequence belongs to the methylthiotransferase family. MiaB subfamily. Monomer. [4Fe-4S] cluster serves as cofactor.

The protein localises to the cytoplasm. The enzyme catalyses N(6)-dimethylallyladenosine(37) in tRNA + (sulfur carrier)-SH + AH2 + 2 S-adenosyl-L-methionine = 2-methylsulfanyl-N(6)-dimethylallyladenosine(37) in tRNA + (sulfur carrier)-H + 5'-deoxyadenosine + L-methionine + A + S-adenosyl-L-homocysteine + 2 H(+). Functionally, catalyzes the methylthiolation of N6-(dimethylallyl)adenosine (i(6)A), leading to the formation of 2-methylthio-N6-(dimethylallyl)adenosine (ms(2)i(6)A) at position 37 in tRNAs that read codons beginning with uridine. In Rickettsia typhi (strain ATCC VR-144 / Wilmington), this protein is tRNA-2-methylthio-N(6)-dimethylallyladenosine synthase.